We begin with the raw amino-acid sequence, 172 residues long: Translationally-controlled tumor protein (172 aa).

In terms of domain architecture, TCTP spans 1–172; that stretch reads MIIYRDLISH…FKDGLEMEKC (172 aa). Residue Ser-46 is modified to Phosphoserine; by PLK1. Ser-53 is modified (phosphoserine). Ser-64 bears the Phosphoserine; by PLK1 mark. Residues 70-172 form a required for reduction of TSC22D1 protein stability region; it reads VDIVMNHHLQ…FKDGLEMEKC (103 aa).

Belongs to the TCTP family. Homodimer. Interacts with STEAP3. Interacts with TSC22D1; interaction results in the destabilization of TSC22D1 protein.

It localises to the cytoplasm. In terms of biological role, involved in calcium binding and microtubule stabilization. Acts as a negative regulator of TSC22D1-mediated apoptosis, via interaction with and destabilization of TSC22D1 protein. The sequence is that of Translationally-controlled tumor protein (TPT1) from Bos taurus (Bovine).